The sequence spans 628 residues: tRNA(Thr) (cytosine(32)-N(3))-methyltransferase (628 aa).

The segment covering 1-18 (MGVADLIKKFESISKEEG) has biased composition (basic and acidic residues). Disordered stretches follow at residues 1–106 (MGVA…GENA), 124–269 (AEVL…VNDL), and 302–331 (NIAH…TEGS). Residues 22-31 (VDTNSSSKPL) are compositionally biased toward polar residues. The span at 32–42 (KSNDETKELHQ) shows a compositional bias: basic and acidic residues. The segment covering 53–62 (DVNEEFENEP) has biased composition (acidic residues). S93 bears the Phosphoserine mark. Residues 132-146 (EESDAIQEGVAEETE) show a composition bias toward acidic residues. Phosphothreonine is present on T150. A compositionally biased stretch (acidic residues) spans 173–186 (PAEEYSQSEEDADI). The segment covering 196–207 (NAENASQQANDG) has biased composition (polar residues). Positions 215–230 (KNKKKKNKKKNKKKRN) are enriched in basic residues. Positions 231 to 240 (GNVNTNANVD) are enriched in polar residues. 2 positions are modified to phosphoserine: S321 and S326. T347 carries the phosphothreonine modification. 7 residues coordinate S-adenosyl-L-methionine: W399, Y403, G441, D466, D492, L493, and I515.

It belongs to the methyltransferase superfamily. METL family. Interacts with SES1.

It is found in the cytoplasm. It localises to the cytoskeleton. The catalysed reaction is cytidine(32) in tRNA(Thr) + S-adenosyl-L-methionine = N(3)-methylcytidine(32) in tRNA(Thr) + S-adenosyl-L-homocysteine + H(+). It catalyses the reaction cytidine(32) in tRNA(Ser) + S-adenosyl-L-methionine = N(3)-methylcytidine(32) in tRNA(Ser) + S-adenosyl-L-homocysteine + H(+). Its function is as follows. S-adenosyl-L-methionine-dependent methyltransferase that mediates N(3)-methylcytidine modification of residue 32 of the tRNA anticodon loop of tRNA(Thr) and tRNA(Ser). N(3)-methylcytidine methylation of tRNA(Thr) requires the N6-threonylcarbamoylation of tRNA (t6A37) by the EKC/KEOPS complex as prerequisite. N(3)-methylcytidine methylation of tRNA(Ser) requires the formation of N(6)-dimethylallyladenosine(37) (i6A37) by MOD5 as prerequisite. Methylation of tRNA(Ser) is also stimulated by SES1. Binds F-actin and shows weak F-actin cross-linking activity. The protein is tRNA(Thr) (cytosine(32)-N(3))-methyltransferase (ABP140) of Saccharomyces cerevisiae (strain ATCC 204508 / S288c) (Baker's yeast).